The primary structure comprises 251 residues: ATP synthase subunit a (251 aa).

6 consecutive transmembrane segments (helical) span residues 30–50 (NSNE…VVAL), 86–106 (FFPF…LGLF), 116–136 (IAIT…VGFW), 145–165 (FFSP…IEIV), 195–215 (FMLM…IIPL), and 219–239 (IALT…FAIL).

Belongs to the ATPase A chain family. In terms of assembly, F-type ATPases have 2 components, CF(1) - the catalytic core - and CF(0) - the membrane proton channel. CF(1) has five subunits: alpha(3), beta(3), gamma(1), delta(1), epsilon(1). CF(0) has three main subunits: a(1), b(2) and c(9-12). The alpha and beta chains form an alternating ring which encloses part of the gamma chain. CF(1) is attached to CF(0) by a central stalk formed by the gamma and epsilon chains, while a peripheral stalk is formed by the delta and b chains.

It localises to the cell inner membrane. Its function is as follows. Key component of the proton channel; it plays a direct role in the translocation of protons across the membrane. This chain is ATP synthase subunit a, found in Acidiphilium cryptum (strain JF-5).